A 176-amino-acid polypeptide reads, in one-letter code: Crossover junction endodeoxyribonuclease RuvC (176 aa).

Catalysis depends on residues Asp-10, Glu-69, and Asp-141. The Mg(2+) site is built by Asp-10, Glu-69, and Asp-141.

Belongs to the RuvC family. Homodimer which binds Holliday junction (HJ) DNA. The HJ becomes 2-fold symmetrical on binding to RuvC with unstacked arms; it has a different conformation from HJ DNA in complex with RuvA. In the full resolvosome a probable DNA-RuvA(4)-RuvB(12)-RuvC(2) complex forms which resolves the HJ. Requires Mg(2+) as cofactor.

It is found in the cytoplasm. The catalysed reaction is Endonucleolytic cleavage at a junction such as a reciprocal single-stranded crossover between two homologous DNA duplexes (Holliday junction).. The RuvA-RuvB-RuvC complex processes Holliday junction (HJ) DNA during genetic recombination and DNA repair. Endonuclease that resolves HJ intermediates. Cleaves cruciform DNA by making single-stranded nicks across the HJ at symmetrical positions within the homologous arms, yielding a 5'-phosphate and a 3'-hydroxyl group; requires a central core of homology in the junction. The consensus cleavage sequence is 5'-(A/T)TT(C/G)-3'. Cleavage occurs on the 3'-side of the TT dinucleotide at the point of strand exchange. HJ branch migration catalyzed by RuvA-RuvB allows RuvC to scan DNA until it finds its consensus sequence, where it cleaves and resolves the cruciform DNA. The protein is Crossover junction endodeoxyribonuclease RuvC of Dichelobacter nodosus (strain VCS1703A).